The primary structure comprises 159 residues: 2-C-methyl-D-erythritol 2,4-cyclodiphosphate synthase (159 aa).

A divalent metal cation is bound by residues aspartate 10 and histidine 12. 4-CDP-2-C-methyl-D-erythritol 2-phosphate contacts are provided by residues aspartate 10–histidine 12 and histidine 37–serine 38. Residue histidine 45 participates in a divalent metal cation binding. Residues aspartate 59–glycine 61, phenylalanine 64–aspartate 68, alanine 103–leucine 109, threonine 135–glutamate 138, phenylalanine 142, and arginine 145 contribute to the 4-CDP-2-C-methyl-D-erythritol 2-phosphate site.

It belongs to the IspF family. As to quaternary structure, homotrimer. A divalent metal cation serves as cofactor.

It carries out the reaction 4-CDP-2-C-methyl-D-erythritol 2-phosphate = 2-C-methyl-D-erythritol 2,4-cyclic diphosphate + CMP. The protein operates within isoprenoid biosynthesis; isopentenyl diphosphate biosynthesis via DXP pathway; isopentenyl diphosphate from 1-deoxy-D-xylulose 5-phosphate: step 4/6. Functionally, involved in the biosynthesis of isopentenyl diphosphate (IPP) and dimethylallyl diphosphate (DMAPP), two major building blocks of isoprenoid compounds. Catalyzes the conversion of 4-diphosphocytidyl-2-C-methyl-D-erythritol 2-phosphate (CDP-ME2P) to 2-C-methyl-D-erythritol 2,4-cyclodiphosphate (ME-CPP) with a corresponding release of cytidine 5-monophosphate (CMP). This is 2-C-methyl-D-erythritol 2,4-cyclodiphosphate synthase from Francisella tularensis subsp. holarctica (strain FTNF002-00 / FTA).